Here is a 171-residue protein sequence, read N- to C-terminus: ATP synthase subunit b (171 aa).

A helical membrane pass occupies residues 2–22 (FVVKMVLGFLILLSPLCATGL).

It belongs to the ATPase B chain family. F-type ATPases have 2 components, F(1) - the catalytic core - and F(0) - the membrane proton channel. F(1) has five subunits: alpha(3), beta(3), gamma(1), delta(1), epsilon(1). F(0) has three main subunits: a(1), b(2) and c(10-14). The alpha and beta chains form an alternating ring which encloses part of the gamma chain. F(1) is attached to F(0) by a central stalk formed by the gamma and epsilon chains, while a peripheral stalk is formed by the delta and b chains.

It localises to the cell inner membrane. Its function is as follows. F(1)F(0) ATP synthase produces ATP from ADP in the presence of a proton or sodium gradient. F-type ATPases consist of two structural domains, F(1) containing the extramembraneous catalytic core and F(0) containing the membrane proton channel, linked together by a central stalk and a peripheral stalk. During catalysis, ATP synthesis in the catalytic domain of F(1) is coupled via a rotary mechanism of the central stalk subunits to proton translocation. Component of the F(0) channel, it forms part of the peripheral stalk, linking F(1) to F(0). The chain is ATP synthase subunit b from Helicobacter pylori (strain G27).